The primary structure comprises 463 residues: MNHLTTLDAGFLKAEDVDRHVSLAIGALAVIEGPAPDQEAFLSSLAQRLRPCTRFGQRLRLRPFDLGAPKWVDDPDFDLGRHVWRIALPRPGNEDQLFELIADLMARRLDRGRPLWEVWVIEGLADSKWAILTKLHHCMADGIAATHLLAGLSDESMSDSFASNIHTTMQSQSASVRRGGFRVNPSEALTASTAVMAGIVRAAKGASEIAAGVLSPAASSLNGPISDLRRYSAAKVPLADVEQVCRKFDVTINDVALAAITESYRNVLIQRGERPRFDSLRTLVPVSTRSNSALSKTDNRVSLMLPNLPVDQENPLQRLRIVHSRLTRAKAGGQRQFGNTLMAIANRLPFPMTAWAVGLLMRLPQRGVVTVATNVPGPRRPLQIMGRRVLDLYPVSPIAMQLRTSVAMLSYADDLYFGILADYDVVADAGQLARGIEDAVARLVAISKRRKVTRRRGALSLVV.

An N-acetylmethionine modification is found at Met1. His137 acts as the Proton acceptor in catalysis.

This sequence belongs to the long-chain O-acyltransferase family.

It carries out the reaction an acyl-CoA + a 1,2-diacyl-sn-glycerol = a triacyl-sn-glycerol + CoA. The catalysed reaction is di-(9Z)-octadecenoylglycerol + (9Z)-octadecenoyl-CoA = 1,2,3-tri-(9Z-octadecenoyl)-glycerol + CoA. The protein operates within glycerolipid metabolism; triacylglycerol biosynthesis. Its function is as follows. Catalyzes the terminal and only committed step in triacylglycerol synthesis by using diacylglycerol and fatty acyl CoA as substrates. Required for storage lipid synthesis. Upon expression in E.coli functions as a triacylglycerol synthase, making triacylglycerol (TG) from diolein and long-chain fatty acyl-CoA. Prefers C(26:0)-CoA over C(18:1)-CoA. TG synthesis activity increases in M.tuberculosis upon oxygen depletion and NO treatment, with concomitant accumulation of TG in inclusion bodies. As disruption of the gene encoding this protein obviates TG synthesis this seems to be the major enzyme involved in production of TG. Has no wax synthase activity to produce wax esters. The chain is Probable diacyglycerol O-acyltransferase tgs1 (tgs1) from Mycobacterium tuberculosis (strain ATCC 25618 / H37Rv).